A 518-amino-acid polypeptide reads, in one-letter code: Membrane-bound lytic murein transglycosylase F (518 aa).

An N-terminal signal peptide occupies residues 1-21 (MKKLKINYLFIGILALLLAVA). The non-LT domain stretch occupies residues 22–269 (LWPSIPWFGK…RIEEKYLGHG (248 aa)). Positions 270–518 (DDFDYVDTRT…SRKGSEEKQN (249 aa)) are LT domain. Residue E314 is part of the active site.

This sequence in the N-terminal section; belongs to the bacterial solute-binding protein 3 family. The protein in the C-terminal section; belongs to the transglycosylase Slt family.

Its subcellular location is the cell outer membrane. The catalysed reaction is Exolytic cleavage of the (1-&gt;4)-beta-glycosidic linkage between N-acetylmuramic acid (MurNAc) and N-acetylglucosamine (GlcNAc) residues in peptidoglycan, from either the reducing or the non-reducing ends of the peptidoglycan chains, with concomitant formation of a 1,6-anhydrobond in the MurNAc residue.. Murein-degrading enzyme that degrades murein glycan strands and insoluble, high-molecular weight murein sacculi, with the concomitant formation of a 1,6-anhydromuramoyl product. Lytic transglycosylases (LTs) play an integral role in the metabolism of the peptidoglycan (PG) sacculus. Their lytic action creates space within the PG sacculus to allow for its expansion as well as for the insertion of various structures such as secretion systems and flagella. The sequence is that of Membrane-bound lytic murein transglycosylase F from Escherichia coli O6:K15:H31 (strain 536 / UPEC).